The sequence spans 216 residues: Adenylate kinase (216 aa).

Position 10–15 (glycine 10–threonine 15) interacts with ATP. The NMP stretch occupies residues serine 30–valine 59. Residues threonine 31, arginine 36, lysine 57 to valine 59, glycine 85 to arginine 88, and glutamine 92 contribute to the AMP site. Residues glycine 126–aspartate 163 form an LID region. Arginine 127 contributes to the ATP binding site. Zn(2+)-binding residues include cysteine 130 and cysteine 133. Residue valine 136–tyrosine 137 participates in ATP binding. Residues cysteine 150 and cysteine 153 each coordinate Zn(2+). 2 residues coordinate AMP: arginine 160 and arginine 172. Alanine 200 contacts ATP.

The protein belongs to the adenylate kinase family. As to quaternary structure, monomer.

It is found in the cytoplasm. The catalysed reaction is AMP + ATP = 2 ADP. Its pathway is purine metabolism; AMP biosynthesis via salvage pathway; AMP from ADP: step 1/1. In terms of biological role, catalyzes the reversible transfer of the terminal phosphate group between ATP and AMP. Plays an important role in cellular energy homeostasis and in adenine nucleotide metabolism. The protein is Adenylate kinase of Rhizobium etli (strain ATCC 51251 / DSM 11541 / JCM 21823 / NBRC 15573 / CFN 42).